Here is an 855-residue protein sequence, read N- to C-terminus: Cone cGMP-specific 3',5'-cyclic phosphodiesterase subunit alpha' (855 aa).

GAF domains follow at residues 70 to 219 (SVEL…SIIL) and 251 to 428 (DVER…GWSL). 3',5'-cyclic GMP contacts are provided by residues Ser-92, Ser-116, 164 to 167 (DKQT), and Thr-171. The PDEase domain occupies 481–814 (EEKQLVTILK…VEWKSLADEY (334 aa)). The active-site Proton donor is His-557. A divalent metal cation-binding residues include His-561, His-597, Asp-598, and Asp-718. Positions 823–855 (EMKKQEEGNTTEKAVEDSGGGGDDKKSKTCLML) are disordered. Cys-852 is modified (cysteine methyl ester). Cys-852 carries the S-geranylgeranyl cysteine lipid modification. A propeptide spans 853–855 (LML) (removed in mature form).

This sequence belongs to the cyclic nucleotide phosphodiesterase family. Composed of two alpha' subunits that are associated with 3 smaller proteins of 11, 13, and 15 kDa. The cofactor is a divalent metal cation.

It localises to the cell membrane. The enzyme catalyses 3',5'-cyclic GMP + H2O = GMP + H(+). Its function is as follows. As cone-specific cGMP phosphodiesterase, it plays an essential role in light detection and cone phototransduction by rapidly decreasing intracellular levels of cGMP. This chain is Cone cGMP-specific 3',5'-cyclic phosphodiesterase subunit alpha' (PDE6C), found in Bos taurus (Bovine).